A 223-amino-acid polypeptide reads, in one-letter code: UPF0758 protein Plut_0598 (223 aa).

The MPN domain occupies Arg100–Leu222. Zn(2+)-binding residues include His171, His173, and Asp184. The JAMM motif motif lies at His171–Asp184.

It belongs to the UPF0758 family.

In Chlorobium luteolum (strain DSM 273 / BCRC 81028 / 2530) (Pelodictyon luteolum), this protein is UPF0758 protein Plut_0598.